The sequence spans 536 residues: Lipid scramblase CLPTM1L (536 aa).

At 1-9 (MLSRSSFTS) the chain is on the cytoplasmic side. A helical membrane pass occupies residues 10-30 (LAVGVFAVYVAHTCWVMYGIV). Over 31 to 284 (YTRPCPSGGA…VKGIFVDTNL (254 aa)) the chain is Extracellular. N-linked (GlcNAc...) asparagine glycans are attached at residues Asn92, Asn102, and Asn229. Residues 285 to 305 (YFLALTFFVAAFHLLFDFLAF) form a helical membrane-spanning segment. Residues 306-324 (KNDISFWKKKRSMIGMSTK) are Cytoplasmic-facing. A helical membrane pass occupies residues 325–342 (AVLWRCFSTVVIFLFLLD). Over 343-346 (EQTS) the chain is Extracellular. Residues 347–364 (LLVLIPAGIGAVIELWKV) form a helical membrane-spanning segment. Residues 365-402 (KKALKMTVKWQGIRPKVQFGASNDSEKKTEEYDTQAMK) are Cytoplasmic-facing. Residues 403 to 423 (YLSYLLYPLCIGGAAYSLLNV) form a helical membrane-spanning segment. Over 424–428 (KYKSW) the chain is Extracellular. A helical transmembrane segment spans residues 429-449 (YSWLINSFVNGVYAFGFLFML). Over 450–536 (PQLFVNYKMK…YEEKPKKKSS (87 aa)) the chain is Cytoplasmic.

Belongs to the CLPTM1 family.

The protein resides in the endoplasmic reticulum membrane. It catalyses the reaction a 6-(alpha-D-glucosaminyl)-1-(1,2-diacyl-sn-glycero-3-phospho)-1D-myo-inositol(in) = a 6-(alpha-D-glucosaminyl)-1-(1,2-diacyl-sn-glycero-3-phospho)-1D-myo-inositol(out). The catalysed reaction is 6-(alpha-D-glucosaminyl)-(1-octadecanoyl,2-(9Z)-octadecenoyl-sn-glycero-3-phospho)-1D-myo-inositol(in) = 6-(alpha-D-glucosaminyl)-(1-octadecanoyl,2-(9Z)-octadecenoyl-sn-glycero-3-phospho)-1D-myo-inositol(out). It carries out the reaction a 1,2-diacyl-sn-glycero-3-phospho-(1D-myo-inositol)(in) = a 1,2-diacyl-sn-glycero-3-phospho-(1D-myo-inositol)(out). The enzyme catalyses a 1,2-diacyl-sn-glycero-3-phosphocholine(in) = a 1,2-diacyl-sn-glycero-3-phosphocholine(out). It catalyses the reaction a 1,2-diacyl-sn-glycero-3-phosphoethanolamine(in) = a 1,2-diacyl-sn-glycero-3-phosphoethanolamine(out). In terms of biological role, scramblase that mediates the translocation of glucosaminylphosphatidylinositol (alpha-D-GlcN-(1-6)-(1,2-diacyl-sn-glycero-3-phospho)-1D-myo-inositol, GlcN-PI) across the endoplasmic reticulum (ER) membrane, from the cytosolic leaflet to the luminal leaflet of the ER membrane, where it participates in the biosynthesis of glycosylphosphatidylinositol (GPI). GPI is a lipid glycoconjugate involved in post-translational modification of proteins. Can also translocate 1,2-diacyl-sn-glycero-3-phospho-(1D-myo-inositol) (phosphatidylinositol or PI), as well as several other phospholipids (1,2-diacyl-sn-glycero-3-phosphocholine, 1,2-diacyl-sn-glycero-3-phosphoethanolamine), and N-acetylglucosaminylphosphatidylinositol (GlcNAc-PI) in vitro. The chain is Lipid scramblase CLPTM1L (CLPTM1L) from Gallus gallus (Chicken).